The chain runs to 46 residues: Large ribosomal subunit protein bL34 (46 aa).

Belongs to the bacterial ribosomal protein bL34 family.

This chain is Large ribosomal subunit protein bL34 (rpmH), found in Mycobacterium avium.